We begin with the raw amino-acid sequence, 339 residues long: D-erythrose-4-phosphate dehydrogenase (339 aa).

Residue 11–12 (RI) coordinates NAD(+). Substrate is bound by residues 153–155 (SCT), Arg199, 212–213 (TK), and Arg235. The Nucleophile role is filled by Cys154. Asn317 contributes to the NAD(+) binding site.

The protein belongs to the glyceraldehyde-3-phosphate dehydrogenase family. Epd subfamily. As to quaternary structure, homotetramer.

The protein localises to the cytoplasm. It catalyses the reaction D-erythrose 4-phosphate + NAD(+) + H2O = 4-phospho-D-erythronate + NADH + 2 H(+). It functions in the pathway cofactor biosynthesis; pyridoxine 5'-phosphate biosynthesis; pyridoxine 5'-phosphate from D-erythrose 4-phosphate: step 1/5. Catalyzes the NAD-dependent conversion of D-erythrose 4-phosphate to 4-phosphoerythronate. This is D-erythrose-4-phosphate dehydrogenase from Shewanella pealeana (strain ATCC 700345 / ANG-SQ1).